Reading from the N-terminus, the 161-residue chain is Large ribosomal subunit protein uL23m (161 aa).

Residues 1–34 constitute a mitochondrion transit peptide; sequence MSKIAGKRLVYFPNITFTLCRGLNLQPKFAVFRV.

The protein belongs to the universal ribosomal protein uL23 family. As to quaternary structure, component of the mitochondrial large ribosomal subunit (mt-LSU). Mature yeast 74S mitochondrial ribosomes consist of a small (37S) and a large (54S) subunit. The 37S small subunit contains a 15S ribosomal RNA (15S mt-rRNA) and at least 32 different proteins. The 54S large subunit contains a 21S rRNA (21S mt-rRNA) and at least 45 different proteins. uL23m forms the wall of the exit tunnel. Interacts with the C-terminus of OXA1.

The protein localises to the mitochondrion. Component of the mitochondrial ribosome (mitoribosome), a dedicated translation machinery responsible for the synthesis of mitochondrial genome-encoded proteins, including at least some of the essential transmembrane subunits of the mitochondrial respiratory chain. The mitoribosomes are attached to the mitochondrial inner membrane and translation products are cotranslationally integrated into the membrane. The sequence is that of Large ribosomal subunit protein uL23m (mrp20) from Schizosaccharomyces pombe (strain 972 / ATCC 24843) (Fission yeast).